The sequence spans 187 residues: Orotate phosphoribosyltransferase (187 aa).

Residues Arg99, Lys100, Lys103, His105, and 125-133 contribute to the 5-phospho-alpha-D-ribose 1-diphosphate site; that span reads DDVITTGGS. Orotate is bound by residues Thr129 and Arg157.

It belongs to the purine/pyrimidine phosphoribosyltransferase family. PyrE subfamily. Homodimer. The cofactor is Mg(2+).

It carries out the reaction orotidine 5'-phosphate + diphosphate = orotate + 5-phospho-alpha-D-ribose 1-diphosphate. It participates in pyrimidine metabolism; UMP biosynthesis via de novo pathway; UMP from orotate: step 1/2. In terms of biological role, catalyzes the transfer of a ribosyl phosphate group from 5-phosphoribose 1-diphosphate to orotate, leading to the formation of orotidine monophosphate (OMP). This is Orotate phosphoribosyltransferase from Leptospira borgpetersenii serovar Hardjo-bovis (strain L550).